The chain runs to 493 residues: Flagellin (493 aa).

It belongs to the bacterial flagellin family.

It is found in the secreted. The protein resides in the bacterial flagellum. Flagellin is the subunit protein which polymerizes to form the filaments of bacterial flagella. The protein is Flagellin (fliC) of Salmonella rubislaw.